The following is a 137-amino-acid chain: Large ribosomal subunit protein uL16c (137 aa).

The protein belongs to the universal ribosomal protein uL16 family. In terms of assembly, part of the 50S ribosomal subunit.

The protein localises to the plastid. The sequence is that of Large ribosomal subunit protein uL16c from Cuscuta reflexa (Southern Asian dodder).